A 202-amino-acid chain; its full sequence is Ribonuclease HII (202 aa).

The region spanning 15-202 (QGVAGVDEAG…APIKAFGISA (188 aa)) is the RNase H type-2 domain. The a divalent metal cation site is built by aspartate 21, glutamate 22, and aspartate 113.

It belongs to the RNase HII family. Mn(2+) serves as cofactor. It depends on Mg(2+) as a cofactor.

It is found in the cytoplasm. It carries out the reaction Endonucleolytic cleavage to 5'-phosphomonoester.. Its function is as follows. Endonuclease that specifically degrades the RNA of RNA-DNA hybrids. In Bordetella avium (strain 197N), this protein is Ribonuclease HII.